The primary structure comprises 116 residues: Protein Wnt-5a (116 aa).

A lipid anchor (O-palmitoleoyl serine; by PORCN) is attached at S1. N69 and N83 each carry an N-linked (GlcNAc...) asparagine glycan. The cysteines at positions 82 and 97 are disulfide-linked.

It belongs to the Wnt family. Post-translationally, palmitoleoylation is required for efficient binding to frizzled receptors. Depalmitoleoylation leads to Wnt signaling pathway inhibition.

It localises to the secreted. It is found in the extracellular space. Its subcellular location is the extracellular matrix. In terms of biological role, ligand for members of the frizzled family of seven transmembrane receptors. Can activate or inhibit canonical Wnt signaling, depending on receptor context. Required during embryogenesis for extension of the primary anterior-posterior axis. This Anser caerulescens (Snow goose) protein is Protein Wnt-5a (WNT5A).